The following is a 156-amino-acid chain: Small ribosomal subunit protein uS7 (156 aa).

This sequence belongs to the universal ribosomal protein uS7 family. In terms of assembly, part of the 30S ribosomal subunit. Contacts proteins S9 and S11.

Functionally, one of the primary rRNA binding proteins, it binds directly to 16S rRNA where it nucleates assembly of the head domain of the 30S subunit. Is located at the subunit interface close to the decoding center, probably blocks exit of the E-site tRNA. The protein is Small ribosomal subunit protein uS7 of Neisseria meningitidis serogroup C (strain 053442).